Consider the following 218-residue polypeptide: GTP cyclohydrolase 1 (218 aa).

Zn(2+) contacts are provided by Cys109, His112, and Cys180.

This sequence belongs to the GTP cyclohydrolase I family. As to quaternary structure, toroid-shaped homodecamer, composed of two pentamers of five dimers.

It catalyses the reaction GTP + H2O = 7,8-dihydroneopterin 3'-triphosphate + formate + H(+). It functions in the pathway cofactor biosynthesis; 7,8-dihydroneopterin triphosphate biosynthesis; 7,8-dihydroneopterin triphosphate from GTP: step 1/1. The sequence is that of GTP cyclohydrolase 1 from Mannheimia succiniciproducens (strain KCTC 0769BP / MBEL55E).